We begin with the raw amino-acid sequence, 471 residues long: UDP-N-acetylmuramoylalanine--D-glutamate ligase (471 aa).

Residue 122–128 (GSNAKST) coordinates ATP.

Belongs to the MurCDEF family.

Its subcellular location is the cytoplasm. The catalysed reaction is UDP-N-acetyl-alpha-D-muramoyl-L-alanine + D-glutamate + ATP = UDP-N-acetyl-alpha-D-muramoyl-L-alanyl-D-glutamate + ADP + phosphate + H(+). It participates in cell wall biogenesis; peptidoglycan biosynthesis. Its function is as follows. Cell wall formation. Catalyzes the addition of glutamate to the nucleotide precursor UDP-N-acetylmuramoyl-L-alanine (UMA). The polypeptide is UDP-N-acetylmuramoylalanine--D-glutamate ligase (Psychrobacter cryohalolentis (strain ATCC BAA-1226 / DSM 17306 / VKM B-2378 / K5)).